The following is a 152-amino-acid chain: UPF0178 protein SAB0630c (152 aa).

It belongs to the UPF0178 family.

The chain is UPF0178 protein SAB0630c from Staphylococcus aureus (strain bovine RF122 / ET3-1).